A 379-amino-acid chain; its full sequence is MIALHFGAGNIGRGFIGALLCKSGYDVVFADVNDAVINELNDKGRYTVEMADAGRKQETIGPVRAINSATQLDELYDLIAKADLVTTAVGPAVLKLIAEPIAEGLKRRMKINKQPLNIIACENMIGGSAHLREEIFARLTETERAAISDSVGFPNSAVDRIVPIQHHDDPLKVTVEPFFEWAVDQTEFAGKVPDIEGVTYVADLAPFIERKLFTVNTGHAMAAYAGYKKGLKTIKDAIHHPEVRQTVAGALEETGRYLVQTYDFTQEEHRAYMTKIIGRFENECLSDDVTRVARSPLRKLGRDDRLVGPARKLCDLGFEPVRLAEGIALALQFDCADDPEAVQLQSMIAEKGYAGVLRDVCGLEEDHSLFKLVISHLKA.

3–14 (ALHFGAGNIGRG) provides a ligand contact to NAD(+).

Belongs to the mannitol dehydrogenase family.

It carries out the reaction D-mannitol 1-phosphate + NAD(+) = beta-D-fructose 6-phosphate + NADH + H(+). The polypeptide is Mannitol-1-phosphate 5-dehydrogenase (Bacillus licheniformis (strain ATCC 14580 / DSM 13 / JCM 2505 / CCUG 7422 / NBRC 12200 / NCIMB 9375 / NCTC 10341 / NRRL NRS-1264 / Gibson 46)).